A 174-amino-acid polypeptide reads, in one-letter code: RNA pyrophosphohydrolase (174 aa).

The region spanning 6–149 (GYRPNVGIIL…KRDVYERALS (144 aa)) is the Nudix hydrolase domain. The Nudix box signature appears at 38 to 59 (GGIKPGESPEAAMYRELLEEVG).

It belongs to the Nudix hydrolase family. RppH subfamily. A divalent metal cation serves as cofactor.

Functionally, accelerates the degradation of transcripts by removing pyrophosphate from the 5'-end of triphosphorylated RNA, leading to a more labile monophosphorylated state that can stimulate subsequent ribonuclease cleavage. The sequence is that of RNA pyrophosphohydrolase from Chromobacterium violaceum (strain ATCC 12472 / DSM 30191 / JCM 1249 / CCUG 213 / NBRC 12614 / NCIMB 9131 / NCTC 9757 / MK).